Here is a 37-residue protein sequence, read N- to C-terminus: Trypsin inhibitor 3 (37 aa).

3 cysteine pairs are disulfide-bonded: Cys-4–Cys-21, Cys-11–Cys-25, and Cys-20–Cys-36.

In terms of biological role, trypsin inhibitor. This is Trypsin inhibitor 3 from Spinacia oleracea (Spinach).